Consider the following 237-residue polypeptide: B3 domain-containing protein At1g20600 (237 aa).

The interval 53–79 (LVSQANQKQSRKREEKTEKNQPKRVKN) is disordered. The segment covering 64–73 (KREEKTEKNQ) has biased composition (basic and acidic residues). Residues 126–230 (KKQLMSSDVD…LEHVFIRGSK (105 aa)) constitute a DNA-binding region (TF-B3).

It is found in the nucleus. The chain is B3 domain-containing protein At1g20600 from Arabidopsis thaliana (Mouse-ear cress).